Here is a 103-residue protein sequence, read N- to C-terminus: Small ribosomal subunit protein uS14c (103 aa).

The interval 26–56 is disordered; that stretch reads SSKKKIRSKVSPLSLSEKTKMQEKLQSLPRN.

This sequence belongs to the universal ribosomal protein uS14 family. As to quaternary structure, part of the 30S ribosomal subunit.

The protein localises to the plastid. The protein resides in the chloroplast. In terms of biological role, binds 16S rRNA, required for the assembly of 30S particles. This is Small ribosomal subunit protein uS14c from Saccharum officinarum (Sugarcane).